The following is a 550-amino-acid chain: Chaperonin GroEL (550 aa).

Residues threonine 29–proline 32, lysine 50, aspartate 86–threonine 90, glycine 416, and aspartate 498 contribute to the ATP site.

Belongs to the chaperonin (HSP60) family. As to quaternary structure, forms a cylinder of 14 subunits composed of two heptameric rings stacked back-to-back. Interacts with the co-chaperonin GroES.

Its subcellular location is the cytoplasm. It carries out the reaction ATP + H2O + a folded polypeptide = ADP + phosphate + an unfolded polypeptide.. Functionally, together with its co-chaperonin GroES, plays an essential role in assisting protein folding. The GroEL-GroES system forms a nano-cage that allows encapsulation of the non-native substrate proteins and provides a physical environment optimized to promote and accelerate protein folding. This Anaplasma phagocytophilum (strain HZ) protein is Chaperonin GroEL.